A 371-amino-acid chain; its full sequence is 4-hydroxy-3-methylbut-2-en-1-yl diphosphate synthase (flavodoxin) (371 aa).

[4Fe-4S] cluster contacts are provided by Cys-272, Cys-275, Cys-307, and Glu-314.

Belongs to the IspG family. The cofactor is [4Fe-4S] cluster.

It catalyses the reaction (2E)-4-hydroxy-3-methylbut-2-enyl diphosphate + oxidized [flavodoxin] + H2O + 2 H(+) = 2-C-methyl-D-erythritol 2,4-cyclic diphosphate + reduced [flavodoxin]. It functions in the pathway isoprenoid biosynthesis; isopentenyl diphosphate biosynthesis via DXP pathway; isopentenyl diphosphate from 1-deoxy-D-xylulose 5-phosphate: step 5/6. Functionally, converts 2C-methyl-D-erythritol 2,4-cyclodiphosphate (ME-2,4cPP) into 1-hydroxy-2-methyl-2-(E)-butenyl 4-diphosphate. The chain is 4-hydroxy-3-methylbut-2-en-1-yl diphosphate synthase (flavodoxin) from Pseudomonas paraeruginosa (strain DSM 24068 / PA7) (Pseudomonas aeruginosa (strain PA7)).